A 179-amino-acid chain; its full sequence is Zinc finger HIT domain-containing protein 3 (179 aa).

Zn(2+)-binding residues include cysteine 11, cysteine 14, cysteine 22, cysteine 25, cysteine 30, cysteine 34, histidine 38, and cysteine 49. The HIT-type zinc finger occupies 11–49 (CVVCLEKPKYRCPACRVPYCSLPCFRKHKAPPLQQLPVC). Serine 104 carries the phosphoserine modification.

As to quaternary structure, thyroid receptor interacting proteins (TRIPs) specifically interact with the ligand binding domain of the thyroid receptor (TR). Requires the presence of thyroid hormone for its interaction. Interacts with NUFIP1. Interacts (via HIT-type zinc finger) with the RUVBL1/RUVBL2 complex in the presence of ADP.

It localises to the cytoplasm. Its subcellular location is the nucleus. The polypeptide is Zinc finger HIT domain-containing protein 3 (ZNHIT3) (Bos taurus (Bovine)).